The primary structure comprises 800 residues: Ion-translocating oxidoreductase complex subunit C (800 aa).

4Fe-4S ferredoxin-type domains follow at residues 367 to 398 (DEFS…QQLY) and 408 to 437 (KARG…VQYY). Residues cysteine 378, cysteine 381, cysteine 384, cysteine 388, cysteine 417, cysteine 420, cysteine 423, and cysteine 427 each coordinate [4Fe-4S] cluster. 5 stretches are compositionally biased toward low complexity: residues 536-553 (GATP…APAP), 571-583 (AKQA…PAAT), 599-617 (AAIA…APAA), 647-667 (AKQA…ADPA), and 675-690 (AAIA…KQAA). Disordered regions lie at residues 536-558 (GATP…DDPR), 571-631 (AKQA…QDDP), and 647-706 (AKQA…ENTD). The span at 693–705 (HATTEPVTVQENT) shows a compositional bias: polar residues.

This sequence belongs to the 4Fe4S bacterial-type ferredoxin family. RnfC subfamily. As to quaternary structure, the complex is composed of six subunits: RnfA, RnfB, RnfC, RnfD, RnfE and RnfG. [4Fe-4S] cluster serves as cofactor.

It is found in the cell inner membrane. Functionally, part of a membrane-bound complex that couples electron transfer with translocation of ions across the membrane. The chain is Ion-translocating oxidoreductase complex subunit C from Edwardsiella ictaluri (strain 93-146).